A 92-amino-acid polypeptide reads, in one-letter code: MARSLKKGPFVDDHLMTKIEKLNEADKKQVVKTWSRRSTIFPQFIGHTIAVYDGRKHVPVYISEDMVGHKLGEFAPTRTYKGHASDDKKTRR.

Belongs to the universal ribosomal protein uS19 family.

In terms of biological role, protein S19 forms a complex with S13 that binds strongly to the 16S ribosomal RNA. This Bacillus licheniformis (strain ATCC 14580 / DSM 13 / JCM 2505 / CCUG 7422 / NBRC 12200 / NCIMB 9375 / NCTC 10341 / NRRL NRS-1264 / Gibson 46) protein is Small ribosomal subunit protein uS19.